The primary structure comprises 183 residues: Probable calcium-binding protein CML47 (183 aa).

2 consecutive EF-hand domains span residues 112–147 (MGKEIVKEAFRLFDENQDGFIDENELKHVLSLLGYD) and 149–183 (CTKMECRKMVKVYDENRDGKIDFYEFVKLIEKSFS). Ca(2+)-binding residues include Asp125, Asn127, Asp129, Glu136, Asp162, Asn164, Asp166, Lys168, and Glu173.

Functionally, potential calcium sensor. In Arabidopsis thaliana (Mouse-ear cress), this protein is Probable calcium-binding protein CML47 (CML47).